Consider the following 762-residue polypeptide: Endonuclease MutS2 (762 aa).

329-336 is a binding site for ATP; it reads GPNTGGKT. The 76-residue stretch at 682–757 folds into the Smr domain; sequence LNLIGKDVET…GSGVTVVYLE (76 aa).

It belongs to the DNA mismatch repair MutS family. MutS2 subfamily. In terms of assembly, homodimer. Binds to stalled ribosomes, contacting rRNA.

In terms of biological role, endonuclease that is involved in the suppression of homologous recombination and thus may have a key role in the control of bacterial genetic diversity. Acts as a ribosome collision sensor, splitting the ribosome into its 2 subunits. Detects stalled/collided 70S ribosomes which it binds and splits by an ATP-hydrolysis driven conformational change. Acts upstream of the ribosome quality control system (RQC), a ribosome-associated complex that mediates the extraction of incompletely synthesized nascent chains from stalled ribosomes and their subsequent degradation. Probably generates substrates for RQC. The sequence is that of Endonuclease MutS2 from Aquifex aeolicus (strain VF5).